A 355-amino-acid chain; its full sequence is 3-dehydroquinate synthase (355 aa).

NAD(+) is bound by residues 69 to 74 (DGEQHK), 103 to 107 (GVIGD), 127 to 128 (TT), Lys-140, Lys-149, and 167 to 170 (TLQT). 3 residues coordinate Zn(2+): Glu-182, His-245, and His-262.

It belongs to the sugar phosphate cyclases superfamily. Dehydroquinate synthase family. The cofactor is Co(2+). Zn(2+) is required as a cofactor. NAD(+) serves as cofactor.

It localises to the cytoplasm. It carries out the reaction 7-phospho-2-dehydro-3-deoxy-D-arabino-heptonate = 3-dehydroquinate + phosphate. The protein operates within metabolic intermediate biosynthesis; chorismate biosynthesis; chorismate from D-erythrose 4-phosphate and phosphoenolpyruvate: step 2/7. Its function is as follows. Catalyzes the conversion of 3-deoxy-D-arabino-heptulosonate 7-phosphate (DAHP) to dehydroquinate (DHQ). The sequence is that of 3-dehydroquinate synthase from Pseudoalteromonas atlantica (strain T6c / ATCC BAA-1087).